Here is a 188-residue protein sequence, read N- to C-terminus: Cytochrome b561 homolog 2 (188 aa).

The Cytoplasmic segment spans residues 1-15; the sequence is MSFTNTPERYGVISA. Residues 16 to 36 traverse the membrane as a helical segment; the sequence is AFHWLSAIIVYGMFALGLWMV. 2 residues coordinate heme b: H18 and H52. Residues 37 to 54 lie on the Periplasmic side of the membrane; that stretch reads TLSYYDGWYHKAPELHKS. The chain crosses the membrane as a helical span at residues 55–75; sequence IGILLMMGLVIRVLWRVISPP. The Cytoplasmic segment spans residues 76 to 91; that stretch reads PGPLPSYSPMTRLAAR. Residues 92–112 form a helical membrane-spanning segment; sequence AGHLALYLLLFAIGISGYLIS. Over 113 to 143 the chain is Periplasmic; the sequence is TADGKPISVFGWFDVPATLADAGAQADFAGA. A helical membrane pass occupies residues 144 to 164; that stretch reads LHFWLAWSVVVLSVMHGFMAL. The heme b site is built by H145 and H159. Residues 165–188 lie on the Cytoplasmic side of the membrane; the sequence is KHHFIDKDDTLKRMLGKSSSDYGV.

This sequence belongs to the cytochrome b561 family. The cofactor is heme b.

Its subcellular location is the cell inner membrane. The polypeptide is Cytochrome b561 homolog 2 (yceJ) (Escherichia coli (strain K12)).